Here is an 840-residue protein sequence, read N- to C-terminus: MDKALKEVFDYSYRDYILSWYGNLSRDEGQLYHLLLEDFWEIARQLHHRLSHVDVVKVVCNDVVRTLLTHFCDLKAANARHEEQPRPFVLHACLRNSDDEVRFLQTCSRVLVFCLLPSKDVQSLSLRIMLAEILTTKVLKPVVELLSNPDYINQMLLAQLAYREQMNEHHKRAYTYAPSYEDFIKLINSNSDVEFLKQLRYQIVVEIIQATTISSFPQLKRHKGKETAAMKADLLRARNMKRYINQLTVAKKQCEKRIRILGGPAYDQQEDGALDEGEGPQSQKILQFEDILANTFYREHFGMYMERMDKRALISFWESVEHLKNANKNEIPQLVGEIYQNFFVESKEISVEKSLYKEIQQCLVGNKGIEVFYKIQEDVYETLKDRYYPSFIVSDLYEKLLIKEEEKHASQMISNKDEMGPRDEAGEEAVDDGTNQINEQASFAVNKLRELNEKLEYKRQALNSIQNAPKPDKKIVSKLKDEIILIEKERTDLQLHMARTDWWCENLGMWKASITSGEVTEENGEQLPCYFVMVSLQEVGGVETKNWTVPRRLSEFQNLHRKLSECVPSLKKVQLPSLSKLPFKSIDQKFMEKSKNQLNKFLQNLLSDERLCQSEALYAFLSPSPDYLKVIDVQGKKNSFSLSSFLERLPRDFFSHQEEETEEDSDLSDYGDDVDGRKDALAEPCFMLIGEIFELRGMFKWVRRTLIALVQVTFGRTINKQIRDTVSWIFSEQMLVYYINIFRDAFWPNGKLAPPTTIRSKEQSQETKQRAQQKLLENIPDMLQSLVGQQNARHGIIKIFNALQETRANKHLLYALMELLLIELCPELRVHLDQLKAGQV.

Residues 1-164 (MDKALKEVFD…MLLAQLAYRE (164 aa)) enclose the PXA domain. Positions 287–401 (QFEDILANTF…IVSDLYEKLL (115 aa)) constitute an RGS domain. A coiled-coil region spans residues 434 to 499 (TNQINEQASF…RTDLQLHMAR (66 aa)). The 121-residue stretch at 508–628 (GMWKASITSG…AFLSPSPDYL (121 aa)) folds into the PX domain. Phosphoserine is present on serine 665.

The protein belongs to the sorting nexin family.

Its subcellular location is the endosome membrane. Its function is as follows. May be involved in several stages of intracellular trafficking. The protein is Sorting nexin-25 (SNX25) of Homo sapiens (Human).